Consider the following 367-residue polypeptide: Cyclin-dependent kinase 5 activator 2 (367 aa).

Over residues 1–11 the composition is skewed to polar residues; sequence MGTVLSLSPAS. Disordered regions lie at residues 1 to 56, 72 to 98, 131 to 175, and 329 to 367; these read MGTV…RLKR, ASAK…LVQQ, AAAT…GSPR, and GEAA…NLDR. Glycine 2 carries the N-myristoyl glycine lipid modification. Over residues 74–84 the composition is skewed to basic residues; that stretch reads AKKKKGSKKVT. Threonine 84 is modified (phosphothreonine). Residues 131-148 are compositionally biased toward low complexity; that stretch reads AAATCEPPSGGSAAAQPP. The segment covering 154 to 171 has biased composition (pro residues); that stretch reads KPPPPPPPAPQVAPPVPG. Residues 342–357 show a composition bias toward low complexity; the sequence is GAPAASSAARDSCAAG.

Belongs to the cyclin-dependent kinase 5 activator family. As to quaternary structure, heterodimer of a catalytic subunit and a regulatory subunit. Post-translationally, myristoylated. The Gly-2-Ala mutant is absent of the cell periphery, suggesting that a proper myristoylation signal is essential for the proper distribution of CDK5R2 (p39). In terms of tissue distribution, brain and neuron specific.

The protein resides in the cell membrane. Activator of CDK5/TPKII. The chain is Cyclin-dependent kinase 5 activator 2 (CDK5R2) from Homo sapiens (Human).